The chain runs to 424 residues: Zinc metalloproteinase-disintegrin-like brevilysin H2a (424 aa).

Gln-1 bears the Pyrrolidone carboxylic acid mark. Residues 9–207 (RYVKLAIVAD…YKPQCILNEP (199 aa)) enclose the Peptidase M12B domain. Asn-69 carries an N-linked (GlcNAc...) asparagine glycan. Asp-96 is a Ca(2+) binding site. Intrachain disulfides connect Cys-120–Cys-202, Cys-164–Cys-186, and Cys-166–Cys-169. His-145 contributes to the Zn(2+) binding site. The active site involves Glu-146. Residues His-149 and His-155 each contribute to the Zn(2+) site. A glycan (N-linked (GlcNAc...) asparagine) is linked at Asn-185. Ca(2+) contacts are provided by Cys-202, Asn-205, Val-217, Asn-220, Leu-222, Glu-224, Glu-227, and Asp-230. Positions 215–301 (PPVCGNELLE…DCPTDDLQRN (87 aa)) constitute a Disintegrin domain. Cystine bridges form between Cys-218-Cys-247, Cys-229-Cys-242, Cys-231-Cys-237, Cys-241-Cys-264, Cys-255-Cys-261, Cys-260-Cys-286, Cys-273-Cys-293, Cys-280-Cys-312, Cys-305-Cys-317, Cys-324-Cys-374, Cys-339-Cys-385, Cys-352-Cys-362, Cys-369-Cys-411, and Cys-405-Cys-417. A D/ECD-tripeptide motif is present at residues 279-281 (DCD). Ca(2+) contacts are provided by Asp-281, Glu-284, and Asp-296. Residue Asn-331 is glycosylated (N-linked (GlcNAc...) asparagine).

Belongs to the venom metalloproteinase (M12B) family. P-III subfamily. P-IIIa sub-subfamily. Monomer. It depends on Zn(2+) as a cofactor. Post-translationally, glycosylated. In terms of tissue distribution, expressed by the venom gland.

It is found in the secreted. With respect to regulation, its proteolytic activity is inhibited by EDTA, TPEN, 1,10-phenanthroline, and some thiol compounds, but is enhanced by alkaline earth metal ions (Mg2+, Ca2+, Sr2+, and Ba2+). Its activity is not modulated by urea (4 M). Non-hemorrhagic metalloproteinase that degrades fibrinogen. The alpha chain (FGA) is rapidly degraded, the beta chain (FGB) is degraded very slowly, while the gamma chain is left intact. Shows a prefential cleavage at X-Leu bonds. Cleaves insulin B chain at '29-His-|-Leu-30', '33-Ser-|-His-34', '38-Ala-|-Leu-39' and '40-Tyr-|-Leu-41' bonds. This is Zinc metalloproteinase-disintegrin-like brevilysin H2a from Gloydius brevicauda (Korean slamosa snake).